We begin with the raw amino-acid sequence, 512 residues long: Alpha-amylase (512 aa).

An N-terminal signal peptide occupies residues 1 to 29 (MKQQKRLYARLLTLLFALIFLLPHSAAAA). 8 residues coordinate Ca(2+): Asn133, Asp190, Ala210, Asp212, Asp223, Asp229, Asp231, and Asp233. Asp190 is a binding site for Na(+). 3 residues coordinate Na(+): Asp212, Asp223, and Asp229. The active-site Nucleophile is Asp260. His264 serves as a coordination point for Ca(2+). Glu290 acts as the Proton donor in catalysis. Ca(2+)-binding residues include Gly329, Tyr331, His435, Asp436, and Asp459.

The protein belongs to the glycosyl hydrolase 13 family. Monomer. Ca(2+) serves as cofactor. The cofactor is Na(+).

Its subcellular location is the secreted. The catalysed reaction is Endohydrolysis of (1-&gt;4)-alpha-D-glucosidic linkages in polysaccharides containing three or more (1-&gt;4)-alpha-linked D-glucose units.. The protein is Alpha-amylase (amyS) of Bacillus licheniformis.